The following is a 321-amino-acid chain: MKSFFLTLFRQQAALTKKLSRVVITLVIVLCAIVAIFRVWAFYTESPWTRDAKFTADVVAIAPDVSGLLTDVRVTDNQLVNKGDVLFVIDQPRYHQAVAQAEADVAYYQALVTEKRRESGRRARLGVSAMSQENIDQSNNALETATHQLAKAQAVMSLAKLELDRTVVRAPADGWVTNLHVQSGEFIERGNTAVALVKKDSFYLLAYMEETKLEGVRRGYRAEITPLGSEKIFYGTVDSVAAGINNSSNSANTKGLANVDSNLEWVRLAQRVPVKIRLDRQMGDLYPAGTTATVVVTGEQVNNDKKPSPLIRLLYRLREFG.

A helical transmembrane segment spans residues 22 to 42 (VVITLVIVLCAIVAIFRVWAF).

It belongs to the membrane fusion protein (MFP) (TC 8.A.1) family.

The protein resides in the cell inner membrane. Functionally, forms an efflux pump with AaeB. The protein is p-hydroxybenzoic acid efflux pump subunit AaeA of Pectobacterium atrosepticum (strain SCRI 1043 / ATCC BAA-672) (Erwinia carotovora subsp. atroseptica).